The following is a 137-amino-acid chain: uncharacterized protein (137 aa).

The region spanning Tyr4–Asp118 is the CENP-V/GFA domain. Zn(2+) is bound by residues Cys8, Cys10, Cys27, Cys29, Cys32, Cys71, and Cys74.

Belongs to the Gfa family. Zn(2+) serves as cofactor.

Its subcellular location is the cytoplasm. It localises to the nucleus. This is an uncharacterized protein from Schizosaccharomyces pombe (strain 972 / ATCC 24843) (Fission yeast).